The primary structure comprises 565 residues: NAD-dependent malic enzyme (565 aa).

Catalysis depends on tyrosine 104, which acts as the Proton donor. Arginine 157 contributes to the NAD(+) binding site. Lysine 175 (proton acceptor) is an active-site residue. Residues glutamate 246, aspartate 247, and aspartate 270 each contribute to the a divalent metal cation site. Aspartate 270 and asparagine 418 together coordinate NAD(+).

The protein belongs to the malic enzymes family. Homotetramer. Mg(2+) is required as a cofactor. Mn(2+) serves as cofactor.

The catalysed reaction is (S)-malate + NAD(+) = pyruvate + CO2 + NADH. The enzyme catalyses oxaloacetate + H(+) = pyruvate + CO2. The chain is NAD-dependent malic enzyme from Yersinia pseudotuberculosis serotype O:1b (strain IP 31758).